The following is a 487-amino-acid chain: Glutamyl-tRNA(Gln) amidotransferase subunit A (487 aa).

Residues Lys-75 and Ser-150 each act as charge relay system in the active site. The active-site Acyl-ester intermediate is the Ser-174.

It belongs to the amidase family. GatA subfamily. In terms of assembly, heterotrimer of A, B and C subunits.

The catalysed reaction is L-glutamyl-tRNA(Gln) + L-glutamine + ATP + H2O = L-glutaminyl-tRNA(Gln) + L-glutamate + ADP + phosphate + H(+). Allows the formation of correctly charged Gln-tRNA(Gln) through the transamidation of misacylated Glu-tRNA(Gln) in organisms which lack glutaminyl-tRNA synthetase. The reaction takes place in the presence of glutamine and ATP through an activated gamma-phospho-Glu-tRNA(Gln). This chain is Glutamyl-tRNA(Gln) amidotransferase subunit A, found in Deinococcus deserti (strain DSM 17065 / CIP 109153 / LMG 22923 / VCD115).